A 514-amino-acid polypeptide reads, in one-letter code: 2,3-bisphosphoglycerate-independent phosphoglycerate mutase (514 aa).

The Mn(2+) site is built by D14 and S64. S64 acts as the Phosphoserine intermediate in catalysis. Substrate-binding positions include H125, 155 to 156 (RD), R187, R193, 263 to 266 (RADR), and K336. D403, H407, D444, H445, and H463 together coordinate Mn(2+).

It belongs to the BPG-independent phosphoglycerate mutase family. Monomer. Requires Mn(2+) as cofactor.

The catalysed reaction is (2R)-2-phosphoglycerate = (2R)-3-phosphoglycerate. It functions in the pathway carbohydrate degradation; glycolysis; pyruvate from D-glyceraldehyde 3-phosphate: step 3/5. Its function is as follows. Catalyzes the interconversion of 2-phosphoglycerate and 3-phosphoglycerate. This Salmonella choleraesuis (strain SC-B67) protein is 2,3-bisphosphoglycerate-independent phosphoglycerate mutase.